The primary structure comprises 68 residues: MTIIFLICLDASTQSTTNNSINNNNNNNNNNNNNNNNNNNNNNNNNNNNNNNNNNNNNNSKVFDFNIF.

A signal peptide spans 1–15; the sequence is MTIIFLICLDASTQS. A disordered region spans residues 14–68; that stretch reads QSTTNNSINNNNNNNNNNNNNNNNNNNNNNNNNNNNNNNNNNNNNNSKVFDFNIF. Residues asparagine 18 and asparagine 58 are each glycosylated (N-linked (GlcNAc...) asparagine). The span at 22–59 shows a compositional bias: low complexity; sequence NNNNNNNNNNNNNNNNNNNNNNNNNNNNNNNNNNNNNN.

Its subcellular location is the secreted. This is an uncharacterized protein from Dictyostelium discoideum (Social amoeba).